A 381-amino-acid chain; its full sequence is Beta-lactamase CMY-2 (381 aa).

Positions 1 to 20 (MMKKSLCCALLLTASFSTFA) are cleaved as a signal peptide. Residue serine 84 is the Acyl-ester intermediate of the active site. Serine 84, glutamine 140, tyrosine 170, and asparagine 172 together coordinate a beta-lactam.

This sequence belongs to the class-C beta-lactamase family.

It catalyses the reaction a beta-lactam + H2O = a substituted beta-amino acid. With respect to regulation, inhibited by the beta-lactamase-blocking agents sulbactam, tazobactam, avibactam and 3-aminophenylboronic acid (APB). In terms of biological role, class C beta-lactamase which confers resistance to penicillins and cephalosporins. Has nitrocefin-, cefoxitin- and cefoperazone-hydrolyzing activities. This chain is Beta-lactamase CMY-2, found in Klebsiella pneumoniae.